The primary structure comprises 516 residues: Putative glucosylceramidase 2 (516 aa).

A signal peptide spans methionine 1 to alanine 23. Glutamate 254 (proton donor) is an active-site residue. The Nucleophile role is filled by glutamate 358.

The protein belongs to the glycosyl hydrolase 30 family.

It catalyses the reaction a beta-D-glucosylceramide + H2O = an N-acyl-sphingoid base + D-glucose. The enzyme catalyses a beta-D-glucosyl-(1&lt;-&gt;1')-N-acylsphing-4-enine + H2O = an N-acylsphing-4-enine + D-glucose. It carries out the reaction an N-acyl-1-beta-D-glucosyl-15-methylhexadecasphing-4-enine + H2O = an N-acyl-15-methylhexadecasphing-4-enine + D-glucose. Its pathway is lipid metabolism; sphingolipid metabolism. Functionally, glucosylceramidase that catalyzes the hydrolysis of glucosylceramides into free ceramides and glucose. C.elegans contain specific sphingoid bases, which are unique or different in structure compared to the sphingoid bases found in other animals. Two examples of these distinctive compounds are: 15-methylhexadecasphinganine and 15-methylhexadecasphing-4-enine. This Caenorhabditis elegans protein is Putative glucosylceramidase 2 (gba-2).